The chain runs to 138 residues: Large ribosomal subunit protein uL16 (138 aa).

It belongs to the universal ribosomal protein uL16 family. In terms of assembly, part of the 50S ribosomal subunit.

Functionally, binds 23S rRNA and is also seen to make contacts with the A and possibly P site tRNAs. In Rubrobacter xylanophilus (strain DSM 9941 / JCM 11954 / NBRC 16129 / PRD-1), this protein is Large ribosomal subunit protein uL16.